A 126-amino-acid polypeptide reads, in one-letter code: Small ribosomal subunit protein uS12 (126 aa).

Asp-89 is modified (3-methylthioaspartic acid). The tract at residues 106–126 is disordered; that stretch reads GVRERRRSRSKYGAKMPRSAA.

This sequence belongs to the universal ribosomal protein uS12 family. Part of the 30S ribosomal subunit. Contacts proteins S8 and S17. May interact with IF1 in the 30S initiation complex.

With S4 and S5 plays an important role in translational accuracy. Functionally, interacts with and stabilizes bases of the 16S rRNA that are involved in tRNA selection in the A site and with the mRNA backbone. Located at the interface of the 30S and 50S subunits, it traverses the body of the 30S subunit contacting proteins on the other side and probably holding the rRNA structure together. The combined cluster of proteins S8, S12 and S17 appears to hold together the shoulder and platform of the 30S subunit. This Tremblaya princeps protein is Small ribosomal subunit protein uS12.